A 269-amino-acid polypeptide reads, in one-letter code: Expansin-B1 (269 aa).

Residues 1–24 (MGSLANNIMVVGAVLAALVAGGSC) form the signal peptide. N-linked (GlcNAc...) asparagine glycosylation is present at asparagine 34. The Expansin-like EG45 domain occupies 63–169 (GGACGIKNVN…RRVRCKYPAG (107 aa)). 3 disulfides stabilise this stretch: cysteine 66/cysteine 94, cysteine 97/cysteine 164, and cysteine 102/cysteine 108. The Expansin-like CBD domain occupies 183–264 (NYLAVLVKYV…NWRPDAVYTS (82 aa)).

It belongs to the expansin family. Expansin B subfamily. As to expression, expressed in anthers and pollen.

Its subcellular location is the secreted. The protein localises to the cell wall. It is found in the membrane. Its function is as follows. May aid fertilization by loosening the cell wall of the stigma and style, thereby facilitating penetration of the pollen tube. Acts selectively on grass cell walls, which are relatively poor in pectins and xyloglucans and rich in glucuronoarabinoxylans and (1-3),(1-4)-beta-D-glucans, when compared with cell walls of other angiosperms, including other monocots. This chain is Expansin-B1 (EXPB1), found in Zea mays (Maize).